Consider the following 211-residue polypeptide: Thymidylate kinase (211 aa).

ATP is bound at residue glycine 11 to threonine 18.

This sequence belongs to the thymidylate kinase family.

It carries out the reaction dTMP + ATP = dTDP + ADP. Phosphorylation of dTMP to form dTDP in both de novo and salvage pathways of dTTP synthesis. This chain is Thymidylate kinase, found in Streptococcus pyogenes serotype M18 (strain MGAS8232).